Consider the following 301-residue polypeptide: WD repeat-containing protein SL1-17 (301 aa).

WD repeat units lie at residues 11-54, 59-98, 101-140, 143-182, 184-223, 227-266, and 269-300; these read AHKE…LKCL, GHRL…LTKT, GDPA…KEGS, LEGK…VQFL, GHAT…LVIP, GHKG…EKHC, and THED…IYQC.

The sequence is that of WD repeat-containing protein SL1-17 from Schistosoma mansoni (Blood fluke).